The chain runs to 467 residues: Nuclear distribution protein PAC1 (467 aa).

A coiled-coil region spans residues 62–96; that stretch reads GSIIRLQRAITKLEQKCDALQQELDDKTKQLETIV. WD repeat units lie at residues 121-160, 164-212, 219-262, 264-302, 325-365, 385-424, and 426-466; these read QNESPVTAIKLHPSLAIVYVGTDTGRLIAYDILNYTIPLA, AHSK…GELK, AHDS…QSFS, HSEWVKSIDVLDEYILSGSLDSTLRLTHWPSGNGLSVGT, PYRD…LKPN, GHTSWVKDLKLRGDHLFSCSDDETIKCWDLNTGNCVKTWS, and IHNN…VKII.

The protein belongs to the WD repeat LIS1/nudF family. As to quaternary structure, self-associates. Interacts with NDL1 and dynein.

It is found in the cytoplasm. The protein localises to the cytoskeleton. Its subcellular location is the spindle pole. Positively regulates the activity of the minus-end directed microtubule motor protein dynein. Plays a central role in positioning the mitotic spindle at the bud neck during cell division. Targets cytoplasmic dynein to microtubule plus ends, thereby promoting dynein-mediated microtubule sliding along the bud cortex and consequently the movement of the mitotic spindle to the bud neck. This chain is Nuclear distribution protein PAC1, found in Candida glabrata (strain ATCC 2001 / BCRC 20586 / JCM 3761 / NBRC 0622 / NRRL Y-65 / CBS 138) (Yeast).